The primary structure comprises 187 residues: Dihydrofolate reductase (187 aa).

Residues 4–185 (PLNCIVAVSQ…IKYKFEVYEK (182 aa)) enclose the DHFR domain. Residues Ala10 and 16–22 (GIGKNGD) each bind NADP(+). 31-36 (EFKYFQ) contributes to the substrate binding site. Lys33 bears the N6-acetyllysine; alternate mark. An N6-succinyllysine; alternate modification is found at Lys33. 55-57 (RKT) provides a ligand contact to NADP(+). Substrate-binding residues include Asn65 and Arg71. Residues 77-79 (SRE) and 117-124 (GGSSVYQE) each bind NADP(+).

It belongs to the dihydrofolate reductase family. As to quaternary structure, homodimer.

It localises to the mitochondrion. The protein resides in the cytoplasm. It catalyses the reaction (6S)-5,6,7,8-tetrahydrofolate + NADP(+) = 7,8-dihydrofolate + NADPH + H(+). The protein operates within cofactor biosynthesis; tetrahydrofolate biosynthesis; 5,6,7,8-tetrahydrofolate from 7,8-dihydrofolate: step 1/1. In terms of biological role, key enzyme in folate metabolism. Contributes to the de novo mitochondrial thymidylate biosynthesis pathway. Catalyzes an essential reaction for de novo glycine and purine synthesis, and for DNA precursor synthesis. Binds its own mRNA. This chain is Dihydrofolate reductase (Dhfr), found in Mus musculus (Mouse).